Here is an 85-residue protein sequence, read N- to C-terminus: U4-theraphotoxin-Hhn1a (85 aa).

The signal sequence occupies residues 1–22; it reads MKVTLIAILTCAAVLVLHTTAA. Positions 23–48 are excised as a propeptide; it reads EELEAESQPMEVGMPDTELAAVDEER. Cystine bridges form between Cys52–Cys66, Cys56–Cys77, and Cys71–Cys82.

It belongs to the neurotoxin 12 (Hwtx-2) family. 02 (Hwtx-2) subfamily. In terms of assembly, monomer. In terms of tissue distribution, expressed by the venom gland.

The protein resides in the secreted. In terms of biological role, neurotoxin active on both insects and mammals. This is U4-theraphotoxin-Hhn1a from Cyriopagopus hainanus (Chinese bird spider).